Consider the following 67-residue polypeptide: Protein SlyX homolog (67 aa).

Over residues 48 to 60 the composition is skewed to polar residues; the sequence is TSAPSTAAESNPQ. Residues 48–67 form a disordered region; sequence TSAPSTAAESNPQHEIPPHY.

This sequence belongs to the SlyX family.

This chain is Protein SlyX homolog, found in Cupriavidus pinatubonensis (strain JMP 134 / LMG 1197) (Cupriavidus necator (strain JMP 134)).